We begin with the raw amino-acid sequence, 1197 residues long: DNA-directed RNA polymerase subunit beta (1197 aa).

Belongs to the RNA polymerase beta chain family. In terms of assembly, the RNAP catalytic core consists of 2 alpha, 1 beta, 1 beta' and 1 omega subunit. When a sigma factor is associated with the core the holoenzyme is formed, which can initiate transcription.

The catalysed reaction is RNA(n) + a ribonucleoside 5'-triphosphate = RNA(n+1) + diphosphate. Functionally, DNA-dependent RNA polymerase catalyzes the transcription of DNA into RNA using the four ribonucleoside triphosphates as substrates. The polypeptide is DNA-directed RNA polymerase subunit beta (Streptococcus pyogenes serotype M12 (strain MGAS9429)).